A 129-amino-acid polypeptide reads, in one-letter code: Calcitonin gene-related peptide 2 (129 aa).

An N-terminal signal peptide occupies residues 1 to 25 (MGFGKPSSFLAFSILVLCQAGSLQA). Positions 26-81 (QPLRSSLESLPDPAALSEKEGRLLLAALVKAYVQRKTNELEQEQEQEMEGSSLTAQ) are excised as a propeptide. A disulfide bridge links Cys85 with Cys90. Phe120 carries the post-translational modification Phenylalanine amide. Residues 126–129 (DLQA) constitute a propeptide that is removed on maturation.

This sequence belongs to the calcitonin family.

The protein localises to the secreted. Its function is as follows. CALCB/CGRP2 is a peptide hormone that induces vasodilation mediated by the CALCRL-RAMP1 receptor complex. Dilates a variety of vessels including the coronary, cerebral and systemic vasculature. Its abundance in the CNS also points toward a neurotransmitter or neuromodulator role. In Equus caballus (Horse), this protein is Calcitonin gene-related peptide 2 (CALCB).